The sequence spans 1292 residues: Putative late blight resistance protein homolog R1C-3 (1292 aa).

2 coiled-coil regions span residues 394-414 (DSLA…ESMQ) and 505-526 (RMNE…KLLN). One can recognise an NB-ARC domain in the interval 505–792 (RMNEEIVGFE…SESFVKSCEG (288 aa)). ATP is bound at residue 538–545 (GMPGLGKT). 7 LRR repeats span residues 842-865 (AEEN…VYSH), 920-944 (FKFL…LFYL), 963-991 (LWNL…VWDM), 1066-1089 (PIRL…CISA), 1094-1113 (YLEL…TADH), 1114-1142 (LKHL…MFPQ), and 1163-1187 (FPNL…FMDI). An HMA domain is found at 1211 to 1278 (ETQVEDNQNT…KLRNVAYADE (68 aa)).

The protein belongs to the disease resistance NB-LRR family.

Its subcellular location is the cytoplasm. It localises to the membrane. Confers resistance to late blight (Phytophthora infestans) races carrying the avirulence gene Avr1. Resistance proteins guard the plant against pathogens that contain an appropriate avirulence protein via an indirect interaction with this avirulence protein. That triggers a defense system including the hypersensitive response, which restricts the pathogen growth. The protein is Putative late blight resistance protein homolog R1C-3 (R1C-3) of Solanum demissum (Wild potato).